A 140-amino-acid chain; its full sequence is Large ribosomal subunit protein uL22 (140 aa).

Residues 115-140 form a disordered region; that stretch reads AKPAAAKKDPKAAAAKADANAGTKEG.

Belongs to the universal ribosomal protein uL22 family. As to quaternary structure, part of the 50S ribosomal subunit.

Its function is as follows. This protein binds specifically to 23S rRNA; its binding is stimulated by other ribosomal proteins, e.g. L4, L17, and L20. It is important during the early stages of 50S assembly. It makes multiple contacts with different domains of the 23S rRNA in the assembled 50S subunit and ribosome. In terms of biological role, the globular domain of the protein is located near the polypeptide exit tunnel on the outside of the subunit, while an extended beta-hairpin is found that lines the wall of the exit tunnel in the center of the 70S ribosome. The sequence is that of Large ribosomal subunit protein uL22 from Heliobacterium modesticaldum (strain ATCC 51547 / Ice1).